The following is a 480-amino-acid chain: Glutamate--tRNA ligase (480 aa).

The 'HIGH' region motif lies at 8-18 (PSPTGPLHIGG). A 'KMSKS' region motif is present at residues 249-253 (KMSKR). Residue Lys-252 coordinates ATP.

Belongs to the class-I aminoacyl-tRNA synthetase family. Glutamate--tRNA ligase type 1 subfamily. In terms of assembly, monomer.

The protein resides in the cytoplasm. The catalysed reaction is tRNA(Glu) + L-glutamate + ATP = L-glutamyl-tRNA(Glu) + AMP + diphosphate. Its function is as follows. Catalyzes the attachment of glutamate to tRNA(Glu) in a two-step reaction: glutamate is first activated by ATP to form Glu-AMP and then transferred to the acceptor end of tRNA(Glu). The polypeptide is Glutamate--tRNA ligase (Carboxydothermus hydrogenoformans (strain ATCC BAA-161 / DSM 6008 / Z-2901)).